The sequence spans 552 residues: Lysine--tRNA ligase (552 aa).

The 'HIGH' region motif lies at 71–79 (PSGLPHLGT). A 'KMSKS' region motif is present at residues 319–323 (KISKS). Residue lysine 322 participates in ATP binding.

The protein belongs to the class-I aminoacyl-tRNA synthetase family.

The protein localises to the cytoplasm. The catalysed reaction is tRNA(Lys) + L-lysine + ATP = L-lysyl-tRNA(Lys) + AMP + diphosphate. The sequence is that of Lysine--tRNA ligase from Caulobacter sp. (strain K31).